Reading from the N-terminus, the 531-residue chain is Efflux pump terG (531 aa).

Residues 1–11 show a composition bias toward polar residues; sequence MSSSTLEGQET. Positions 1–27 are disordered; that stretch reads MSSSTLEGQETASHHSKNSPSRHGDDG. 13 helical membrane passes run 86 to 106, 117 to 137, 145 to 165, 179 to 199, 207 to 227, 249 to 269, 280 to 300, 319 to 339, 351 to 371, 380 to 400, 402 to 422, 447 to 467, and 488 to 508; these read GKLS…ILIG, AIFV…GVSV, ILAR…ALAI, FAWF…FGPL, WIYW…IVAI, IDLL…FAWN, YVYV…YVEL, FVFG…FYVI, IQMA…ALIV, ASSI…LMAL, PVHS…TFAM, SVIM…AGTI, and TLWF…IFLL.

It belongs to the major facilitator superfamily.

It localises to the cell membrane. Its function is as follows. Efflux pump that might be required for efficient secretion of terrein or other secondary metabolies produced by the terrein genne cluster. This is Efflux pump terG from Aspergillus terreus (strain NIH 2624 / FGSC A1156).